The following is an 897-amino-acid chain: Pre-mRNA-splicing factor CWC22 homolog (897 aa).

Polar residues predominate over residues 1–10; that stretch reads MSSSRSQSPE. The interval 1-155 is disordered; that stretch reads MSSSRSQSPE…EKKKKEPLDI (155 aa). Composition is skewed to basic and acidic residues over residues 36–54, 93–107, and 131–155; these read SSEK…REVS, RSKE…EKSP, and RSSE…PLDI. Positions 194–382 constitute an MIF4G domain; that stretch reads KKKIHGLVNR…ETAMQIRKDK (189 aa). The interval 444–472 is disordered; that stretch reads NADISDEDGGDELDDEEEGSDVEEAPKKT. The span at 447-466 shows a compositional bias: acidic residues; it reads ISDEDGGDELDDEEEGSDVE. An MI domain is found at 485–601; it reads AFRREVYLTM…DWKILADMKM (117 aa). 2 stretches are compositionally biased toward low complexity: residues 689 to 710 and 720 to 730; these read LDQL…SDSS and DSSSDSSSSSE. Positions 689–897 are disordered; sequence LDQLKAESSS…VESDDRRRRR (209 aa). A compositionally biased stretch (basic and acidic residues) spans 743–897; the sequence is NSEESSKKKE…VESDDRRRRR (155 aa).

This sequence belongs to the CWC22 family. Expressed in germ cells, oocytes, and sperm cells.

It is found in the nucleus. Its subcellular location is the nucleus speckle. Functionally, required for pre-mRNA splicing and for exon-junction complex (EJC) assembly. Hinders EIF4A3 from non-specifically binding RNA and escorts it to the splicing machinery to promote EJC assembly on mature mRNAs. Through its role in EJC assembly, required for nonsense-mediated mRNA decay. Plays a role in the nuclear retention of unspliced mRNAs. Plays a role in sex determination. Required for early embryogenesis and tissue differentiation. In Caenorhabditis elegans, this protein is Pre-mRNA-splicing factor CWC22 homolog.